Reading from the N-terminus, the 405-residue chain is MEAEEPPEARRRCPEALGKASGCCPEAPGKARGCCPEALGKLLPGLCFLCCLVTYALVGAALFSAVEGRPDPEAEENPELKKFLDKLCNILKCNLTVVEGSRKDLCEHLQQLKPQWFKAPEDWSFLSALFFCCTVFSTVGYGHMYPVTRLGKFLCMLYALFGIPLMFLVLTDIGDILAAILSRAYSRFQALLCLPRDISKWRPLLLCRKQTDSKPADEAIPQIVIDAGADELLDPQPSREPASPSCNVELFERLVAREKQNELQPPMRPVERSNSCPELVLGRLSCSILSNLDEVGQQVERLDIPLPVIALVIFAYISCAAAILPFWETDLGFEDAFYFCFVTLTTIGFGDIVLVHPHFFLFFSIYIIVGMEILFIAFKLMQNRLLHTYKTLMLFVCQREVSLPC.

The chain crosses the membrane as a helical span at residues 43–63; sequence LPGLCFLCCLVTYALVGAALF. A glycan (N-linked (GlcNAc...) asparagine) is linked at N94. The segment at residues 125–151 is an intramembrane region (pore-forming); sequence FLSALFFCCTVFSTVGYGHMYPVTRLG. K(+) is bound by residues T138, V139, G140, and Y141. The segment at 138 to 143 is selectivity filter 1; sequence TVGYGH. A helical membrane pass occupies residues 153–173; the sequence is FLCMLYALFGIPLMFLVLTDI. Residues 221–226 form an interaction with calcineurin region; that stretch reads PQIVID. Positions 272–277 are interaction with YWHAH; it reads RSNSCP. S275 and S287 each carry phosphoserine. The helical transmembrane segment at 304 to 324 threads the bilayer; the sequence is IPLPVIALVIFAYISCAAAIL. Positions 337–351 form an intramembrane region, pore-forming; that stretch reads FYFCFVTLTTIGFGD. The selectivity filter 2 stretch occupies residues 346–351; that stretch reads TIGFGD. The helical transmembrane segment at 358–378 threads the bilayer; the sequence is HFFLFFSIYIIVGMEILFIAF.

Belongs to the two pore domain potassium channel (TC 1.A.1.8) family. As to quaternary structure, homodimer. Heterodimer with KCNK2. Heterodimer with KCNK10. Interacts with calcineurin. Interacts with YWHAH, in a phosphorylation-dependent manner. In terms of processing, phosphorylation of Ser-275 is required for the binding of 14-3-3eta/YWHAH. Calcineurin-mediated dephosphorylation of Ser-287 enhances channel activity. Post-translationally, N-glycosylated.

It is found in the cell membrane. The enzyme catalyses K(+)(in) = K(+)(out). Its activity is regulated as follows. Activated by volatile anesthetics, such as isoflurane and inhibited by local anesthetics such as bupivacaine and lidocaine. Inhibited by extracellular acidic pH. Inhibited by Zn(2+) ions. K(+) channel that conducts outward and inward rectifying currents at depolarized and hyperpolarized membrane potentials, respectively. The outward rectifying currents are voltage-dependent, coupled to K(+) electrochemical gradient across the membrane, whereas the inward currents can be induced in response to activation of Ca(2+)-mobilizing receptors. Homo- and heterodimerizes to form functional channels with distinct regulatory and gating properties. In trigeminal ganglia sensory neurons, the heterodimers of KCNK18/TRESK and KCNK2/TREK-1 or KCNK10/TREK-2 inhibit neuronal firing and neurogenic inflammation by stabilizing the resting membrane potential at K(+) equilibrium potential as well as by regulating the threshold of action potentials and the spike frequency. In thymocytes, conducts K(+) currents upon T cell receptor (TCR) signaling leading to sustained Ca(2+) influx and NF-kappa-B activation, FOXP3 transcription and positive selection of regulatory T cell (Treg) progenitor subsets. Appears to mediate the analgesics effects of hydroxy-alpha-sanshool, a metabolite naturally present in Schezuan pepper and other Xanthoxylum plants. This Rattus norvegicus (Rat) protein is Potassium channel subfamily K member 18 (Kcnk18).